Here is a 209-residue protein sequence, read N- to C-terminus: Octanoyltransferase (209 aa).

The 180-residue stretch at 30-209 (GEAPEAVYLV…LEVEFIKIFK (180 aa)) folds into the BPL/LPL catalytic domain. Substrate contacts are provided by residues 69-76 (RGGKFTFH), 143-145 (AIG), and 156-158 (GIA). Residue Cys-174 is the Acyl-thioester intermediate of the active site.

It belongs to the LipB family.

The protein resides in the cytoplasm. The enzyme catalyses octanoyl-[ACP] + L-lysyl-[protein] = N(6)-octanoyl-L-lysyl-[protein] + holo-[ACP] + H(+). It participates in protein modification; protein lipoylation via endogenous pathway; protein N(6)-(lipoyl)lysine from octanoyl-[acyl-carrier-protein]: step 1/2. Functionally, catalyzes the transfer of endogenously produced octanoic acid from octanoyl-acyl-carrier-protein onto the lipoyl domains of lipoate-dependent enzymes. Lipoyl-ACP can also act as a substrate although octanoyl-ACP is likely to be the physiological substrate. The protein is Octanoyltransferase of Rickettsia bellii (strain OSU 85-389).